The chain runs to 621 residues: uncharacterized protein (621 aa).

A phosphoserine mark is found at serine 269, serine 271, serine 274, serine 290, and serine 292. LRR repeat units follow at residues 333–354, 357–379, 380–401, 404–425, 426–447, and 451–472; these read QLLY…VFLS, SLVS…GELP, QLCS…YHIS, HLQI…ENVP, SLEK…RRLV, and NFEE…YRIT. The disordered stretch occupies residues 552–581; that stretch reads SKNASGGDTSSNVSLLNGSASEEIPQNTES.

It is found in the cytoplasm. It localises to the nucleus. Its subcellular location is the vacuole membrane. This is an uncharacterized protein from Schizosaccharomyces pombe (strain 972 / ATCC 24843) (Fission yeast).